The sequence spans 621 residues: uncharacterized protein (621 aa).

The N-terminal stretch at 1–15 (MRRSVCYVTPSVARA) is a signal peptide.

The protein belongs to the chlamydial CPn_0512/CT_425/TC_0708 family.

This is an uncharacterized protein from Chlamydia trachomatis serovar D (strain ATCC VR-885 / DSM 19411 / UW-3/Cx).